The following is a 366-amino-acid chain: Transcription factor IIIA (366 aa).

9 C2H2-type zinc fingers span residues 35-59 (YICS…LCKH), 65-89 (FPCK…SLTH), 95-120 (FTCD…NRFH), 127-151 (YVCH…QFSH), 157-181 (YECP…EKVH), 184-210 (YPCK…AECH), 214-236 (AVCD…QKTH), 243-268 (YLCP…QSFH), and 274-298 (FVCE…SVVH). Residue Ser-38 is modified to Phosphoserine; by CK2. A compositionally biased stretch (basic and acidic residues) spans 299–310 (DPEKRKLKEKCP). Positions 299–366 (DPEKRKLKEK…SLVLDKLTIQ (68 aa)) are disordered. Ser-336 bears the Phosphoserine; by CK2; in vitro mark.

Post-translationally, the N-terminus is blocked. As to expression, synthesized in oocytes and, in much lower levels, in somatic cells.

Its subcellular location is the nucleus. Its function is as follows. Involved in ribosomal large subunit biogenesis. Acts both as a positive transcription factor for 5S RNA genes, and as a specific RNA binding protein that complexes with 5S RNA in oocytes to form the 7S ribonucleoprotein storage particle. May play an essential role in the developmental change in 5S RNA gene expression. Interacts with the internal control region (ICR) of approximately 50 bases within the 5S RNA genes, is required for correct transcription of these genes by RNA polymerase III. Also binds the transcribed 5S RNA's. This chain is Transcription factor IIIA (gtf3a), found in Xenopus laevis (African clawed frog).